A 1213-amino-acid polypeptide reads, in one-letter code: DNA-directed RNA polymerase subunit beta (1213 aa).

A disordered region spans residues Arg1153–Lys1213. Residues Met1171–Asp1198 show a composition bias toward basic and acidic residues.

The protein belongs to the RNA polymerase beta chain family. In terms of assembly, the RNAP catalytic core consists of 2 alpha, 1 beta, 1 beta' and 1 omega subunit. When a sigma factor is associated with the core the holoenzyme is formed, which can initiate transcription.

The enzyme catalyses RNA(n) + a ribonucleoside 5'-triphosphate = RNA(n+1) + diphosphate. In terms of biological role, DNA-dependent RNA polymerase catalyzes the transcription of DNA into RNA using the four ribonucleoside triphosphates as substrates. This chain is DNA-directed RNA polymerase subunit beta, found in Lactobacillus acidophilus (strain ATCC 700396 / NCK56 / N2 / NCFM).